A 268-amino-acid polypeptide reads, in one-letter code: Phosphatidylglycerol--prolipoprotein diacylglyceryl transferase (268 aa).

A run of 3 helical transmembrane segments spans residues 25–45 (WYGV…TKVF), 57–77 (YLFY…HCFF), and 93–113 (VWHG…AVYF). Arg142 provides a ligand contact to a 1,2-diacyl-sn-glycero-3-phospho-(1'-sn-glycerol). Transmembrane regions (helical) follow at residues 151–171 (IIGI…DLLP), 175–195 (VQLY…LAYW), 204–224 (GLLL…LEFF), and 236–256 (PLSV…LLIF).

It belongs to the Lgt family.

The protein resides in the cell inner membrane. It catalyses the reaction L-cysteinyl-[prolipoprotein] + a 1,2-diacyl-sn-glycero-3-phospho-(1'-sn-glycerol) = an S-1,2-diacyl-sn-glyceryl-L-cysteinyl-[prolipoprotein] + sn-glycerol 1-phosphate + H(+). The protein operates within protein modification; lipoprotein biosynthesis (diacylglyceryl transfer). Catalyzes the transfer of the diacylglyceryl group from phosphatidylglycerol to the sulfhydryl group of the N-terminal cysteine of a prolipoprotein, the first step in the formation of mature lipoproteins. This chain is Phosphatidylglycerol--prolipoprotein diacylglyceryl transferase, found in Chloroherpeton thalassium (strain ATCC 35110 / GB-78).